Here is a 367-residue protein sequence, read N- to C-terminus: Peptide chain release factor 2 (367 aa).

N5-methylglutamine is present on glutamine 250.

Belongs to the prokaryotic/mitochondrial release factor family. Post-translationally, methylated by PrmC. Methylation increases the termination efficiency of RF2.

The protein resides in the cytoplasm. Peptide chain release factor 2 directs the termination of translation in response to the peptide chain termination codons UGA and UAA. This is Peptide chain release factor 2 from Saccharopolyspora erythraea (strain ATCC 11635 / DSM 40517 / JCM 4748 / NBRC 13426 / NCIMB 8594 / NRRL 2338).